Reading from the N-terminus, the 885-residue chain is MMGISKRISSIKFALLSPDEIRKLSQVKVITADTYDDDGYPIEHGLMDLHMGVIEPGLRCATCGGKVDECPGHFGHIELAMPVVHVGFVKEIKMFLDATCRSCGRIKLTDDEIRTYLPEIQKMDFETGDPEDIEILTKKYVDLASQRMVCPHCGAQQSKIILDKPTTFREEGTNVKITPKEIRERLERIPDDDLIFFGFNPKTARPEWMVLTVLPVPPINVRPSITLETGERSEDDLTHKLVDIIRISQRLRESRDNGSPQLIIEDLWDLLQFHVTTYFDNQTPGIPPARHRSGRALKTLVQRLKGKEGRFRSNLSGKRVSFSSRTVISPEPYLSVNEVGVPERAARELTVPVIVNQFNIDEMRELIKRGRNPRDQFGRYVTGVNYVIRPDGRRIKITDQNAAENADRIDIGWTVERQLMEGDIVLFNRQPSLHRMSMMGHTVRILPGQTFRFNLAVCTPYNADFDGDEMNLHVIQKEEARAEARIIMKVQEQIMSPRFGGPIIGGIHDHVTALFLLTHNNPRYTHEEMVHIMAYLEPDLLPEARIENGEKYYYGRDIFSTILPKGLNVRFRSKLCSGSSERCEFEDDPSDTYVEIVDGKMIHGTIDEAAVSPFSGAIIDKIFRKFGSQEAARFIDRMTRLAVGFITYRGFSTGISDYDIPESAVARIEELVAQAEDRINKLIETFRRGELQPAPGRSVEDTLEMEILSEAGVVRDESGKIASSYLGLKVPSVIMARSGARATMLNISEVAGIVGQQSVRGGRLNRGYYNRTLPHFKRGDIGADARGFVRSSYMTGLSPTEYFFHSIGGREGLVDTAVRTSRSGYMQRRLINAFEDLKVDDSREVKDTVGSLIQIRYGEDGIDPTRSARGKAVDMNYILFDEERR.

Zn(2+) contacts are provided by cysteine 60, cysteine 63, cysteine 70, histidine 73, cysteine 100, cysteine 103, cysteine 150, and cysteine 153. Residues aspartate 464, aspartate 466, and aspartate 468 each contribute to the Mg(2+) site.

Belongs to the RNA polymerase beta' chain family. Part of the RNA polymerase complex. It depends on Mg(2+) as a cofactor. Requires Zn(2+) as cofactor.

It is found in the cytoplasm. It carries out the reaction RNA(n) + a ribonucleoside 5'-triphosphate = RNA(n+1) + diphosphate. Its function is as follows. DNA-dependent RNA polymerase (RNAP) catalyzes the transcription of DNA into RNA using the four ribonucleoside triphosphates as substrates. Forms the clamp head domain. The polypeptide is DNA-directed RNA polymerase subunit Rpo1N (Thermoplasma acidophilum (strain ATCC 25905 / DSM 1728 / JCM 9062 / NBRC 15155 / AMRC-C165)).